We begin with the raw amino-acid sequence, 510 residues long: D-alanine--D-alanyl carrier protein ligase (510 aa).

157 to 158 (TS) contacts ATP. D202 contributes to the D-alanine binding site. 297 to 302 (NTYGPT) provides a ligand contact to ATP. V306 provides a ligand contact to D-alanine. The ATP site is built by D389 and K498. Position 498 (K498) interacts with D-alanine.

This sequence belongs to the ATP-dependent AMP-binding enzyme family. DltA subfamily.

It is found in the cytoplasm. The enzyme catalyses holo-[D-alanyl-carrier protein] + D-alanine + ATP = D-alanyl-[D-alanyl-carrier protein] + AMP + diphosphate. It functions in the pathway cell wall biogenesis; lipoteichoic acid biosynthesis. Its function is as follows. Catalyzes the first step in the D-alanylation of lipoteichoic acid (LTA), the activation of D-alanine and its transfer onto the D-alanyl carrier protein (Dcp) DltC. In an ATP-dependent two-step reaction, forms a high energy D-alanyl-AMP intermediate, followed by transfer of the D-alanyl residue as a thiol ester to the phosphopantheinyl prosthetic group of the Dcp. D-alanylation of LTA plays an important role in modulating the properties of the cell wall in Gram-positive bacteria, influencing the net charge of the cell wall. This Listeria monocytogenes serotype 4b (strain CLIP80459) protein is D-alanine--D-alanyl carrier protein ligase.